A 356-amino-acid chain; its full sequence is NADH-quinone oxidoreductase subunit H (356 aa).

9 helical membrane passes run 16–36 (IAVLQILAFAVVLLISLAFLL), 52–72 (PNVVGAFGLLQSFADFFKFVF), 85–105 (LYLLAPLITLILAFVTWAVVP), 117–137 (VGILYLFAMSSLGVYGIIIGG), 163–183 (IGFIIVTVLLFAGSMNLSEII), 201–221 (WPMPMFLVMIPMAVIFFISAL), 254–274 (FMVGEYLNIVLMCAMTAILFF), 295–315 (AWYFFWFAAKIVFFFFMFAMV), and 334–354 (IFLPISLAAVALVGAAVVYGP).

This sequence belongs to the complex I subunit 1 family. In terms of assembly, NDH-1 is composed of 14 different subunits. Subunits NuoA, H, J, K, L, M, N constitute the membrane sector of the complex.

The protein localises to the cell inner membrane. It carries out the reaction a quinone + NADH + 5 H(+)(in) = a quinol + NAD(+) + 4 H(+)(out). NDH-1 shuttles electrons from NADH, via FMN and iron-sulfur (Fe-S) centers, to quinones in the respiratory chain. The immediate electron acceptor for the enzyme in this species is believed to be ubiquinone. Couples the redox reaction to proton translocation (for every two electrons transferred, four hydrogen ions are translocated across the cytoplasmic membrane), and thus conserves the redox energy in a proton gradient. This subunit may bind ubiquinone. This is NADH-quinone oxidoreductase subunit H from Maricaulis maris (strain MCS10) (Caulobacter maris).